A 249-amino-acid chain; its full sequence is Putative TrmH family tRNA/rRNA methyltransferase YacO (249 aa).

Residues Gly-198, Leu-218, and Leu-227 each contribute to the S-adenosyl-L-methionine site.

This sequence belongs to the class IV-like SAM-binding methyltransferase superfamily. RNA methyltransferase TrmH family.

The chain is Putative TrmH family tRNA/rRNA methyltransferase YacO (yacO) from Bacillus subtilis (strain 168).